The following is a 425-amino-acid chain: Adenylosuccinate synthetase (425 aa).

Residues 12–18 (GDEGKGK) and 40–42 (GHT) each bind GTP. The Proton acceptor role is filled by D13. Residues D13 and G40 each contribute to the Mg(2+) site. Residues 13–16 (DEGK), 38–41 (NAGH), T130, R144, Q224, T239, and R301 each bind IMP. H41 serves as the catalytic Proton donor. 297–303 (TVSNRRR) contacts substrate. GTP is bound by residues R303, 329-331 (KLD), and 411-413 (STS).

The protein belongs to the adenylosuccinate synthetase family. In terms of assembly, homodimer. Mg(2+) is required as a cofactor.

Its subcellular location is the cytoplasm. The enzyme catalyses IMP + L-aspartate + GTP = N(6)-(1,2-dicarboxyethyl)-AMP + GDP + phosphate + 2 H(+). Its pathway is purine metabolism; AMP biosynthesis via de novo pathway; AMP from IMP: step 1/2. In terms of biological role, plays an important role in the de novo pathway of purine nucleotide biosynthesis. Catalyzes the first committed step in the biosynthesis of AMP from IMP. This is Adenylosuccinate synthetase from Wolbachia pipientis subsp. Culex pipiens (strain wPip).